The following is a 471-amino-acid chain: Cysteine--tRNA ligase (471 aa).

C30 contributes to the Zn(2+) binding site. The short motif at 32 to 42 (PTVYNFAHIGN) is the 'HIGH' region element. Positions 212, 237, and 241 each coordinate Zn(2+). Residues 270–274 (KMSKS) carry the 'KMSKS' region motif. Position 273 (K273) interacts with ATP.

This sequence belongs to the class-I aminoacyl-tRNA synthetase family. Monomer. It depends on Zn(2+) as a cofactor.

Its subcellular location is the cytoplasm. It catalyses the reaction tRNA(Cys) + L-cysteine + ATP = L-cysteinyl-tRNA(Cys) + AMP + diphosphate. In Leptospira interrogans serogroup Icterohaemorrhagiae serovar copenhageni (strain Fiocruz L1-130), this protein is Cysteine--tRNA ligase.